The following is a 337-amino-acid chain: Transcription initiation factor IIB (337 aa).

A TFIIB-type zinc finger spans residues 37 to 68 (EKAVCPECGSRNLVHDYERAELVCGDCGLVID). 4 residues coordinate Zn(2+): Cys-41, Cys-44, Cys-60, and Cys-63. 2 repeat units span residues 154-237 (SELD…SREL) and 248-329 (DYVP…ELAE).

This sequence belongs to the TFIIB family.

Stabilizes TBP binding to an archaeal box-A promoter. Also responsible for recruiting RNA polymerase II to the pre-initiation complex (DNA-TBP-TFIIB). This Methanosarcina mazei (Methanosarcina frisia) protein is Transcription initiation factor IIB.